Reading from the N-terminus, the 338-residue chain is Ketol-acid reductoisomerase (NADP(+)) (338 aa).

Residues Ile3–Thr183 form the KARI N-terminal Rossmann domain. NADP(+) contacts are provided by residues Tyr26–Gln29, Arg49, Ser52, Ser54, and Asp84–Gln87. The active site involves His109. Residue Gly135 participates in NADP(+) binding. Residues Thr184–Val329 enclose the KARI C-terminal knotted domain. Mg(2+) contacts are provided by Asp192, Glu196, Glu228, and Glu232. Ser253 is a binding site for substrate.

Belongs to the ketol-acid reductoisomerase family. Mg(2+) serves as cofactor.

It carries out the reaction (2R)-2,3-dihydroxy-3-methylbutanoate + NADP(+) = (2S)-2-acetolactate + NADPH + H(+). It catalyses the reaction (2R,3R)-2,3-dihydroxy-3-methylpentanoate + NADP(+) = (S)-2-ethyl-2-hydroxy-3-oxobutanoate + NADPH + H(+). The protein operates within amino-acid biosynthesis; L-isoleucine biosynthesis; L-isoleucine from 2-oxobutanoate: step 2/4. Its pathway is amino-acid biosynthesis; L-valine biosynthesis; L-valine from pyruvate: step 2/4. Its function is as follows. Involved in the biosynthesis of branched-chain amino acids (BCAA). Catalyzes an alkyl-migration followed by a ketol-acid reduction of (S)-2-acetolactate (S2AL) to yield (R)-2,3-dihydroxy-isovalerate. In the isomerase reaction, S2AL is rearranged via a Mg-dependent methyl migration to produce 3-hydroxy-3-methyl-2-ketobutyrate (HMKB). In the reductase reaction, this 2-ketoacid undergoes a metal-dependent reduction by NADPH to yield (R)-2,3-dihydroxy-isovalerate. In Corynebacterium jeikeium (strain K411), this protein is Ketol-acid reductoisomerase (NADP(+)).